The sequence spans 292 residues: RWD domain-containing protein 2A (292 aa).

One can recognise an RWD domain in the interval 14-134 (LEMEMLFSMF…QWLQDNSASY (121 aa)).

The chain is RWD domain-containing protein 2A (RWDD2A) from Macaca fascicularis (Crab-eating macaque).